A 262-amino-acid polypeptide reads, in one-letter code: Acyl-[acyl-carrier-protein]--UDP-N-acetylglucosamine O-acyltransferase (262 aa).

Belongs to the transferase hexapeptide repeat family. LpxA subfamily. Homotrimer.

It is found in the cytoplasm. It carries out the reaction a (3R)-hydroxyacyl-[ACP] + UDP-N-acetyl-alpha-D-glucosamine = a UDP-3-O-[(3R)-3-hydroxyacyl]-N-acetyl-alpha-D-glucosamine + holo-[ACP]. Its pathway is glycolipid biosynthesis; lipid IV(A) biosynthesis; lipid IV(A) from (3R)-3-hydroxytetradecanoyl-[acyl-carrier-protein] and UDP-N-acetyl-alpha-D-glucosamine: step 1/6. Involved in the biosynthesis of lipid A, a phosphorylated glycolipid that anchors the lipopolysaccharide to the outer membrane of the cell. This is Acyl-[acyl-carrier-protein]--UDP-N-acetylglucosamine O-acyltransferase from Paracidovorax citrulli (strain AAC00-1) (Acidovorax citrulli).